Consider the following 711-residue polypeptide: Triacylglycerol hydrolase DDHD2 (711 aa).

Residues 1–24 (MSSVQSQQEQLSQSDPSPSPNSCS) form a disordered region. The region spanning 30 to 112 (DMDAGSLYEP…WDELASEVRR (83 aa)) is the WWE domain. Serine 351 (nucleophile) is an active-site residue. An SAM domain is found at 385 to 448 (GDTPTLEEDL…NYFSTRKNSM (64 aa)). Serine 447 carries the post-translational modification Phosphoserine. Disordered regions lie at residues 449–470 (GIKR…SEFC) and 609–638 (LQAS…EETS). Positions 495 to 700 (LIYKPEIFFA…VLLVLKEIYQ (206 aa)) constitute a DDHD domain. The span at 614–624 (TPEETEAEPES) shows a compositional bias: acidic residues.

This sequence belongs to the PA-PLA1 family. Forms homooligomers and, to a much smaller extent, heterooligomers with DDHD1. As to expression, widely expressed (at protein level).

The protein localises to the cytoplasm. The protein resides in the cytosol. It localises to the endoplasmic reticulum-Golgi intermediate compartment. Its subcellular location is the golgi apparatus. It is found in the cis-Golgi network. It carries out the reaction a triacylglycerol + H2O = a diacylglycerol + a fatty acid + H(+). The catalysed reaction is a diacylglycerol + H2O = a monoacylglycerol + a fatty acid + H(+). The enzyme catalyses a 1,3-diacylglycerol + H2O = a 1-acylglycerol + a fatty acid + H(+). It catalyses the reaction a 1-acylglycerol + H2O = glycerol + a fatty acid + H(+). It carries out the reaction 1,2,3-tri-(9Z-octadecenoyl)-glycerol + H2O = di-(9Z)-octadecenoylglycerol + (9Z)-octadecenoate + H(+). The catalysed reaction is di-(9Z)-octadecenoylglycerol + H2O = (9Z-octadecenoyl)-glycerol + (9Z)-octadecenoate + H(+). The enzyme catalyses 1,3-di-(9Z-octadecenoyl)-glycerol + H2O = 1-(9Z-octadecenoyl)-glycerol + (9Z)-octadecenoate + H(+). It catalyses the reaction trihexadecanoylglycerol + H2O = dihexadecanoylglycerol + hexadecanoate + H(+). It carries out the reaction 1,2-di-(9Z-octadecenoyl)-sn-glycero-3-phosphocholine + H2O = (9Z-octadecenoyl)-sn-glycero-3-phosphocholine + (9Z)-octadecenoate + H(+). The catalysed reaction is 1-(9Z-octadecenoyl)-glycerol + H2O = glycerol + (9Z)-octadecenoate + H(+). The enzyme catalyses 1,2-di-(9Z-octadecenoyl)-sn-glycero-3-phosphate + H2O = 2-(9Z-octadecenoyl)-sn-glycero-3-phosphate + (9Z)-octadecenoate + H(+). It catalyses the reaction 1-hexadecanoyl-2-(9Z-octadecenoyl)-sn-glycero-3-phosphate + H2O = 2-(9Z-octadecenoyl)-sn-glycero-3-phosphate + hexadecanoate + H(+). It carries out the reaction 1-hexadecanoyl-2-(9Z-octadecenoyl)-sn-glycero-3-phosphoethanolamine + H2O = 2-(9Z-octadecenoyl)-sn-glycero-3-phosphoethanolamine + hexadecanoate + H(+). The catalysed reaction is 1-hexadecanoyl-2-(9Z-octadecenoyl)-sn-glycero-3-phospho-L-serine + H2O = 2-(9Z-octadecenoyl)-sn-glycero-3-phospho-L-serine + hexadecanoate + H(+). The enzyme catalyses 1-hexadecanoyl-2-(9Z-octadecenoyl)-sn-glycero-3-phosphocholine + H2O = 2-(9Z-octadecenoyl)-sn-glycero-3-phosphocholine + hexadecanoate + H(+). Its function is as follows. Diacylglycerol (DAG) and triacylglycerol (TAG) lipase required for proper lipid homeostasis in the central nervous system. It cooperates with PNPLA2/ATGL in neuronal TAG catabolism and hydrolyzes sn-1,3 DAG downstream of PNPLA2/ATGL. In vitro, it also acts as a phospholipase that hydrolyzes preferentially phosphatidic acids, including 1,2-dioleoyl-sn-phosphatidic acid, phosphatidylcholine and phosphatidylethanolamine. Specifically binds to phosphatidylinositol 3-phosphate (PI(3)P), phosphatidylinositol 4-phosphate (PI(4)P), phosphatidylinositol 5-phosphate (PI(5)P) and possibly phosphatidylinositol 4,5-bisphosphate (PI(4,5)P2). May be involved in the maintenance of the endoplasmic reticulum and/or Golgi structures. May regulate the transport between Golgi apparatus and plasma membrane. The polypeptide is Triacylglycerol hydrolase DDHD2 (Homo sapiens (Human)).